The chain runs to 387 residues: MEQINSNKKHSNRRKYFSLLAVVLFIAFSGAYAYWSMELEDMISTDDAYVTGNADPISAQVSGSVTVVNHKDTNYVRQGDILVSLDKTDATIALNKAKNNLANIVRQTNKLYLQDKQYSAEVASARIQYQQSLEDYNRRVPLAKQGVISKETLEHTKDTLISSKAALNAAIQAYKANKALVMNTPLNRQPQVVEAADATKEAWLALKRTDIKSPVTGYIAQRSVQVGETVSPGQSLMAVVPARQMWVNANFKETQLTDVRIGQSVNIISDLYGENVVFHGRVTGINMGTGNAFSLLPAQNATGNWIKIVQRVPVEVSLDPKELMEHPLRIGLSMTATIDTKNEDIAEMPELASTVTSMPAYTSKALVIDTSPIEKEISNIISHNGQL.

Residues 1-16 (MEQINSNKKHSNRRKY) lie on the Cytoplasmic side of the membrane. A helical transmembrane segment spans residues 17-37 (FSLLAVVLFIAFSGAYAYWSM). Topologically, residues 38 to 387 (ELEDMISTDD…SNIISHNGQL (350 aa)) are periplasmic.

This sequence belongs to the membrane fusion protein (MFP) (TC 8.A.1) family. Part of the tripartite efflux system EmrYK-TolC, which is composed of an inner membrane transporter, EmrY, a membrane fusion protein, EmrK, and an outer membrane component, TolC. The complex forms a large protein conduit and can translocate molecules across both the inner and outer membranes.

It localises to the cell inner membrane. Functionally, part of the tripartite efflux system EmrYK-TolC, which confers resistance to various drugs. The polypeptide is Probable multidrug resistance protein EmrK (emrK) (Escherichia coli (strain K12)).